The primary structure comprises 673 residues: Mechanosensitive ion channel protein 2, chloroplastic (673 aa).

A chloroplast-targeting transit peptide spans Met1–Arg75. The next 5 membrane-spanning stretches (helical) occupy residues Phe107–Leu127, Tyr152–Cys172, Leu193–Ile213, Ala240–Ser260, and Trp264–Thr284. The interval Lys492–Pro673 is disordered. 3 stretches are compositionally biased toward basic and acidic residues: residues Ala510–Ser525, Thr564–Pro576, and Gly617–Gly642. Ser571 bears the Phosphoserine mark. Residues Ser661–Pro673 are compositionally biased toward polar residues.

Belongs to the MscS (TC 1.A.23) family. Widely expressed.

The protein localises to the plastid. It localises to the chloroplast membrane. Its function is as follows. Mechanosensitive channel that opens in response to stretch forces in the membrane lipid bilayer. Controls plastid size, shape, and perhaps division during normal plant development by altering ion flux in response to changes in membrane tension. Acts as a component of the chloroplast division machinery. This chain is Mechanosensitive ion channel protein 2, chloroplastic (MSL2), found in Arabidopsis thaliana (Mouse-ear cress).